We begin with the raw amino-acid sequence, 365 residues long: tRNA(Met) cytidine acetate ligase (365 aa).

Residues 7–20 (IAEF…HKYL), G96, N152, and R175 contribute to the ATP site.

Belongs to the TmcAL family.

It is found in the cytoplasm. It carries out the reaction cytidine(34) in elongator tRNA(Met) + acetate + ATP = N(4)-acetylcytidine(34) in elongator tRNA(Met) + AMP + diphosphate. Functionally, catalyzes the formation of N(4)-acetylcytidine (ac(4)C) at the wobble position of elongator tRNA(Met), using acetate and ATP as substrates. First activates an acetate ion to form acetyladenylate (Ac-AMP) and then transfers the acetyl group to tRNA to form ac(4)C34. The sequence is that of tRNA(Met) cytidine acetate ligase from Streptococcus pneumoniae (strain ATCC 700669 / Spain 23F-1).